The primary structure comprises 206 residues: LexA repressor (206 aa).

Positions 28–48 form a DNA-binding region, H-T-H motif; the sequence is RAEIATRLGFKSANAAEEHLK. Residues S123 and K160 each act as for autocatalytic cleavage activity in the active site.

The protein belongs to the peptidase S24 family. Homodimer.

It carries out the reaction Hydrolysis of Ala-|-Gly bond in repressor LexA.. Its function is as follows. Represses a number of genes involved in the response to DNA damage (SOS response), including recA and lexA. In the presence of single-stranded DNA, RecA interacts with LexA causing an autocatalytic cleavage which disrupts the DNA-binding part of LexA, leading to derepression of the SOS regulon and eventually DNA repair. This chain is LexA repressor, found in Shewanella sp. (strain ANA-3).